The sequence spans 273 residues: Putative pyruvate, phosphate dikinase regulatory protein (273 aa).

153-160 (GISRTSKT) contacts ADP.

The protein belongs to the pyruvate, phosphate/water dikinase regulatory protein family. PDRP subfamily.

It catalyses the reaction N(tele)-phospho-L-histidyl/L-threonyl-[pyruvate, phosphate dikinase] + ADP = N(tele)-phospho-L-histidyl/O-phospho-L-threonyl-[pyruvate, phosphate dikinase] + AMP + H(+). The catalysed reaction is N(tele)-phospho-L-histidyl/O-phospho-L-threonyl-[pyruvate, phosphate dikinase] + phosphate + H(+) = N(tele)-phospho-L-histidyl/L-threonyl-[pyruvate, phosphate dikinase] + diphosphate. Its function is as follows. Bifunctional serine/threonine kinase and phosphorylase involved in the regulation of the pyruvate, phosphate dikinase (PPDK) by catalyzing its phosphorylation/dephosphorylation. The sequence is that of Putative pyruvate, phosphate dikinase regulatory protein from Rhizobium leguminosarum bv. trifolii (strain WSM2304).